Reading from the N-terminus, the 365-residue chain is MSRPVPNPGILDIAPYTPGKSPVPEAGRKVFKLSANETPFGPSPKAMDAYRNAVAHLQDYPEGTSRVLREAIGRAYGLDPDRIICGAGSDEILNLLAHVYLSHGDEAVSTTHSFLVYPIATTANGAENVVAPEVDYTADVDAILQRVTPKTKMVWLANPNNPTGTYLPFDEIKRLHGGLPPHVLLVLDAAYSDYVSRNDYELGIELAATTGNTVLTHTFSKIHGLAALRIGWMFGPAHVVDAVNRIRGPFNVSTPAMLAAAAAIGDTAHVQMSKVHTEKWRNWLTDEVTKLGLKVTPSVTNFILIHFPTTKGKTASEADAFLTKRGLVLRALDNYGLPNALRMTIGTEEANRLVADGLRDFMAQK.

Residue lysine 221 is modified to N6-(pyridoxal phosphate)lysine.

This sequence belongs to the class-II pyridoxal-phosphate-dependent aminotransferase family. Histidinol-phosphate aminotransferase subfamily. As to quaternary structure, homodimer. Requires pyridoxal 5'-phosphate as cofactor.

It carries out the reaction L-histidinol phosphate + 2-oxoglutarate = 3-(imidazol-4-yl)-2-oxopropyl phosphate + L-glutamate. Its pathway is amino-acid biosynthesis; L-histidine biosynthesis; L-histidine from 5-phospho-alpha-D-ribose 1-diphosphate: step 7/9. This Nitrobacter hamburgensis (strain DSM 10229 / NCIMB 13809 / X14) protein is Histidinol-phosphate aminotransferase.